A 470-amino-acid chain; its full sequence is E3 SUMO-protein ligase EGR2 (470 aa).

The segment covering 126 to 141 (PPASTTASSSVTSASP) has biased composition (low complexity). Disordered regions lie at residues 126–153 (PPAS…GVCT), 159–178 (PELD…SGCT), and 184–211 (DPSA…YPSP). The residue at position 247 (lysine 247) is an N6-acetyllysine; by EP300. The interval 275 to 344 (GPSAGVTGPG…RPYPCPAEGC (70 aa)) is disordered. Positions 281-291 (TGPGASGGGEG) are enriched in gly residues. 3 C2H2-type zinc fingers span residues 337–361 (YPCP…IRIH), 367–389 (FQCR…IRTH), and 395–417 (FACD…TKIH). Residues 408 to 470 (DERKRHTKIH…ASCTSRTRTP (63 aa)) are disordered. Basic residues predominate over residues 412–422 (RHTKIHLRQKE). The span at 426–439 (SAPSSSASAQSSAS) shows a compositional bias: low complexity. Over residues 440 to 450 (GPGGSQAGGSL) the composition is skewed to gly residues.

Belongs to the EGR C2H2-type zinc-finger protein family. Interacts with HCFC1. Interacts with WWP2. Interacts with UBC9. Interacts with CITED1. Interacts (via phosphorylated form) with SFN. In terms of processing, ubiquitinated by WWP2 leading to proteasomal degradation. Acetylated at Lys-247. May be deacetylated by HDAC6, HDAC10 or SIRT1.

It localises to the nucleus. It functions in the pathway protein modification; protein sumoylation. Its function is as follows. Sequence-specific DNA-binding transcription factor. Plays a role in hindbrain segmentation by regulating the expression of a subset of homeobox containing genes and in Schwann cell myelination by regulating the expression of genes involved in the formation and maintenance of myelin. Binds to two EGR2-consensus sites EGR2A (5'-CTGTAGGAG-3') and EGR2B (5'-ATGTAGGTG-3') in the HOXB3 enhancer and promotes HOXB3 transcriptional activation. Binds to specific DNA sites located in the promoter region of HOXA4, HOXB2 and ERBB2. Regulates hindbrain segmentation by controlling the expression of Hox genes, such as HOXA4, HOXB3 and HOXB2, and thereby specifying odd and even rhombomeres. Promotes the expression of HOXB3 in the rhombomere r5 in the hindbrain. Regulates myelination in the peripheral nervous system after birth, possibly by regulating the expression of myelin proteins, such as MPZ, and by promoting the differentiation of Schwann cells. Involved in the development of the jaw openener musculature, probably by playing a role in its innervation through trigeminal motor neurons. May play a role in adipogenesis, possibly by regulating the expression of CEBPB. E3 SUMO-protein ligase helping SUMO1 conjugation to its coregulators NAB1 and NAB2, whose sumoylation down-regulates EGR2 transcriptional activity. This Rattus norvegicus (Rat) protein is E3 SUMO-protein ligase EGR2 (Egr2).